Reading from the N-terminus, the 238-residue chain is MKNQIQVQLSKLKETSNSENAIKKQLEIIETIEYNDYLQLKKLAEIFHYRITKPEYISNCVDGLIYEKLLNSQNSEIIKFTSKLCPKGIVPLKSNKQMDYQDLQILLVQNNLIAADKLTQQKLIKLAGVDEKSRNWLYFTDIKKIPVEDLQTIDQLWNAHSKGKFGFFVQRQIWLALEKNWEQFWYKIGWEINRVPCRYPEEFHWNSTGPKGHLPLCNQLRGVQVLSALFSHKAWDNY.

This sequence belongs to the ycf53 family.

The protein resides in the plastid. Its subcellular location is the chloroplast. This is an uncharacterized protein from Porphyra purpurea (Red seaweed).